Consider the following 192-residue polypeptide: dCTP deaminase, dUMP-forming (192 aa).

Residues Lys101 to Arg106, Asp119, Thr127 to Glu129, Gln148, Tyr162, and Gln174 contribute to the dCTP site. Glu129 functions as the Proton donor/acceptor in the catalytic mechanism. A disordered region spans residues Ser169 to Arg192. The span at Tyr171–Arg192 shows a compositional bias: polar residues.

This sequence belongs to the dCTP deaminase family. As to quaternary structure, homotrimer.

The enzyme catalyses dCTP + 2 H2O = dUMP + NH4(+) + diphosphate. Its pathway is pyrimidine metabolism; dUMP biosynthesis; dUMP from dCTP: step 1/1. In terms of biological role, bifunctional enzyme that catalyzes both the deamination of dCTP to dUTP and the hydrolysis of dUTP to dUMP without releasing the toxic dUTP intermediate. The polypeptide is dCTP deaminase, dUMP-forming (Salinispora tropica (strain ATCC BAA-916 / DSM 44818 / JCM 13857 / NBRC 105044 / CNB-440)).